Reading from the N-terminus, the 124-residue chain is Large ribosomal subunit protein bL12 (124 aa).

This sequence belongs to the bacterial ribosomal protein bL12 family. Homodimer. Part of the ribosomal stalk of the 50S ribosomal subunit. Forms a multimeric L10(L12)X complex, where L10 forms an elongated spine to which 2 to 4 L12 dimers bind in a sequential fashion. Binds GTP-bound translation factors.

Functionally, forms part of the ribosomal stalk which helps the ribosome interact with GTP-bound translation factors. Is thus essential for accurate translation. This chain is Large ribosomal subunit protein bL12, found in Burkholderia lata (strain ATCC 17760 / DSM 23089 / LMG 22485 / NCIMB 9086 / R18194 / 383).